The primary structure comprises 177 residues: Decaprenylphosphoryl-5-phosphoribose phosphatase (177 aa).

The next 4 helical transmembrane spans lie at 35–55 (HFGEHCIGWLILALLGAIALP), 62–82 (LVAGAGAFVAHAIAVLIKRLV), 124–144 (GLPLPVVLVPPMALSRILLGV), and 150–170 (VAVGVALGATVGAIVDSVGGG).

This sequence belongs to the PA-phosphatase related phosphoesterase family.

It is found in the cell membrane. It catalyses the reaction trans,octa-cis-decaprenylphospho-beta-D-ribofuranose 5-phosphate + H2O = trans,octa-cis-decaprenylphospho-beta-D-ribofuranose + phosphate. It participates in cell wall biogenesis; cell wall polysaccharide biosynthesis. Functionally, phosphatase involved in the biosynthesis of decaprenylphosphoryl arabinose (DPA), which serves as the arabinose donor for the biosynthesis of arabinogalactan, the major mycobacterial cell wall polysaccharide. Catalyzes the dephosphorylation of decaprenylphosphoryl-5-phosphoribose (DPPR) to decaprenyl-phosphoribose (DPR). This Mycobacterium tuberculosis (strain CDC 1551 / Oshkosh) protein is Decaprenylphosphoryl-5-phosphoribose phosphatase.